Reading from the N-terminus, the 59-residue chain is Photosystem II reaction center protein K (59 aa).

Residues 1 to 22 (MILYSHLSTLIDIDLSNNIFLA) constitute a propeptide that is removed on maturation. The helical transmembrane segment at 30–50 (IFDPLVDVMPVIPVFFLLLAF) threads the bilayer.

This sequence belongs to the PsbK family. PSII is composed of 1 copy each of membrane proteins PsbA, PsbB, PsbC, PsbD, PsbE, PsbF, PsbH, PsbI, PsbJ, PsbK, PsbL, PsbM, PsbT, PsbX, PsbY, PsbZ, Psb30/Ycf12, at least 3 peripheral proteins of the oxygen-evolving complex and a large number of cofactors. It forms dimeric complexes.

The protein localises to the plastid. It localises to the chloroplast thylakoid membrane. In terms of biological role, one of the components of the core complex of photosystem II (PSII). PSII is a light-driven water:plastoquinone oxidoreductase that uses light energy to abstract electrons from H(2)O, generating O(2) and a proton gradient subsequently used for ATP formation. It consists of a core antenna complex that captures photons, and an electron transfer chain that converts photonic excitation into a charge separation. The protein is Photosystem II reaction center protein K of Chara vulgaris (Common stonewort).